A 388-amino-acid polypeptide reads, in one-letter code: Pyruvate dehydrogenase E1 component subunit alpha, testis-specific form, mitochondrial (388 aa).

A mitochondrion-targeting transit peptide spans 1 to 27 (MLAAFISRVLRRVAQKSARRVLVASRN). Positions 90, 116, 117, 163, 165, 194, 195, 196, 223, and 225 each coordinate pyruvate. Tyr116, Arg117, Gly163, Val165, Asp194, Gly195, Ala196, and Asn223 together coordinate thiamine diphosphate. Asp194 provides a ligand contact to Mg(2+). Mg(2+) contacts are provided by Asn223 and Tyr225. His290 is a thiamine diphosphate binding site. Residue Ser291 is modified to Phosphoserine; by PDK1, PDK2, PDK3 and PDK4. Position 293 is a phosphoserine (Ser293). Ser298 carries the post-translational modification Phosphoserine; by PDK3.

Heterotetramer of two PDHA2 and two PDHB subunits. The heterotetramer interacts with DLAT, and is part of the multimeric pyruvate dehydrogenase complex that contains multiple copies of pyruvate dehydrogenase (E1), dihydrolipoamide acetyltransferase (DLAT, E2) and lipoamide dehydrogenase (DLD, E3). These subunits are bound to an inner core composed of about 48 DLAT and 12 PDHX molecules. It depends on thiamine diphosphate as a cofactor. The cofactor is Mg(2+). In terms of processing, phosphorylation at Ser-291, Ser-293 and Ser-298 by PDK family kinases inactivates the enzyme; for this phosphorylation at a single site is sufficient. Phosphorylation at Ser-293 interferes with access to active site, and thereby inactivates the enzyme. Dephosphorylation at all three sites, i.e. at Ser-291, Ser-293 and Ser-298, is required for reactivation. As to expression, testis. Expressed in postmeiotic spermatogenic cells.

The protein resides in the mitochondrion matrix. The catalysed reaction is N(6)-[(R)-lipoyl]-L-lysyl-[protein] + pyruvate + H(+) = N(6)-[(R)-S(8)-acetyldihydrolipoyl]-L-lysyl-[protein] + CO2. With respect to regulation, pyruvate dehydrogenase activity is inhibited by phosphorylation of PDHA2; it is reactivated by dephosphorylation. Functionally, the pyruvate dehydrogenase complex catalyzes the overall conversion of pyruvate to acetyl-CoA and CO(2), and thereby links the glycolytic pathway to the tricarboxylic cycle. This is Pyruvate dehydrogenase E1 component subunit alpha, testis-specific form, mitochondrial (PDHA2) from Homo sapiens (Human).